A 424-amino-acid chain; its full sequence is Enolase (424 aa).

Q165 is a binding site for (2R)-2-phosphoglycerate. The Proton donor role is filled by E207. Mg(2+)-binding residues include D244, E283, and D310. The (2R)-2-phosphoglycerate site is built by K335, R364, S365, and K386. K335 serves as the catalytic Proton acceptor.

Belongs to the enolase family. It depends on Mg(2+) as a cofactor.

It localises to the cytoplasm. Its subcellular location is the secreted. The protein resides in the cell surface. The enzyme catalyses (2R)-2-phosphoglycerate = phosphoenolpyruvate + H2O. It functions in the pathway carbohydrate degradation; glycolysis; pyruvate from D-glyceraldehyde 3-phosphate: step 4/5. Its function is as follows. Catalyzes the reversible conversion of 2-phosphoglycerate (2-PG) into phosphoenolpyruvate (PEP). It is essential for the degradation of carbohydrates via glycolysis. The protein is Enolase of Chlamydia trachomatis serovar D (strain ATCC VR-885 / DSM 19411 / UW-3/Cx).